Here is a 374-residue protein sequence, read N- to C-terminus: Type II methyltransferase M.NgoFVII (374 aa).

An SAM-dependent MTase C5-type domain is found at 16–344 (PKILSLFSGC…KSILPIFSDN (329 aa)). Cys88 is an active-site residue.

Belongs to the class I-like SAM-binding methyltransferase superfamily. C5-methyltransferase family.

It carries out the reaction a 2'-deoxycytidine in DNA + S-adenosyl-L-methionine = a 5-methyl-2'-deoxycytidine in DNA + S-adenosyl-L-homocysteine + H(+). Its function is as follows. A methylase, recognizes the double-stranded sequence 5'-GCSGC-3', methylates C-5 on both strands, and protects the DNA from cleavage by the NgoFVII endonuclease. The chain is Type II methyltransferase M.NgoFVII (ngoFVIIM) from Neisseria gonorrhoeae.